The primary structure comprises 161 residues: 3-isopropylmalate dehydratase small subunit (161 aa).

This sequence belongs to the LeuD family. LeuD type 2 subfamily. Heterodimer of LeuC and LeuD.

It carries out the reaction (2R,3S)-3-isopropylmalate = (2S)-2-isopropylmalate. It participates in amino-acid biosynthesis; L-leucine biosynthesis; L-leucine from 3-methyl-2-oxobutanoate: step 2/4. Its function is as follows. Catalyzes the isomerization between 2-isopropylmalate and 3-isopropylmalate, via the formation of 2-isopropylmaleate. The protein is 3-isopropylmalate dehydratase small subunit of Metallosphaera sedula (strain ATCC 51363 / DSM 5348 / JCM 9185 / NBRC 15509 / TH2).